We begin with the raw amino-acid sequence, 516 residues long: GMP synthase [glutamine-hydrolyzing] (516 aa).

The region spanning 8-198 is the Glutamine amidotransferase type-1 domain; the sequence is KILILDFGSQ…ALNICKCDAL (191 aa). Cysteine 84 (nucleophile) is an active-site residue. Residues histidine 172 and glutamate 174 contribute to the active site. The region spanning 199–391 is the GMPS ATP-PPase domain; that stretch reads WNIENIIEND…LGLPYNMLYR (193 aa). 226–232 contacts ATP; the sequence is SGGVDSS.

In terms of assembly, homodimer.

The enzyme catalyses XMP + L-glutamine + ATP + H2O = GMP + L-glutamate + AMP + diphosphate + 2 H(+). Its pathway is purine metabolism; GMP biosynthesis; GMP from XMP (L-Gln route): step 1/1. In terms of biological role, catalyzes the synthesis of GMP from XMP. The chain is GMP synthase [glutamine-hydrolyzing] from Francisella philomiragia subsp. philomiragia (strain ATCC 25017 / CCUG 19701 / FSC 153 / O#319-036).